Reading from the N-terminus, the 504-residue chain is Sodium-coupled neutral amino acid symporter 2 (504 aa).

Positions 1 to 28 (MNKAPAQMSRFNIAPDMDSSSTNSNEYT) are disordered. At 1–79 (MNKAPAQMSR…SPGSASFGMS (79 aa)) the chain is on the cytoplasmic side. Residues 1–99 (MNKAPAQMSR…SGILGLSYAM (99 aa)) form a regulates protein turnover upon amino acid deprivation region. Residues 19–28 (SSSTNSNEYT) are compositionally biased toward low complexity. A helical transmembrane segment spans residues 80-99 (VFNLGNAIMGSGILGLSYAM). Residue N85 participates in Na(+) binding. Residues 100–105 (ANTGIA) lie on the Extracellular side of the membrane. A helical membrane pass occupies residues 106-126 (MFVILLVAVAIFSLYSVHLLL). The Cytoplasmic portion of the chain corresponds to 127–161 (KTANEGGSLVYEQLGYKAFGIPGKLAASCSITMQN). Residues 162–180 (FGAMASYLYIVKYELPIVI) traverse the membrane as a helical segment. Topologically, residues 181–189 (RAFLDSNDN) are extracellular. The chain crosses the membrane as a helical span at residues 190 to 210 (AWYTNGDYLVLIVTMSIILPL). Residues 211–218 (SLLKNLGY) lie on the Cytoplasmic side of the membrane. Residues 219–239 (LGYTSGFSLLCMVFFLIVVIY) form a helical membrane-spanning segment. Residues 240–285 (KKFQIPCPLPENFINITVNVSQPPQTNNSTDEECCKPKYFIFNSQT) lie on the Extracellular side of the membrane. C246 and C274 form a disulfide bridge. N-linked (GlcNAc...) asparagine glycans are attached at residues N254 and N258. Residues 286 to 306 (VYAVPILTFAFVCHPAILPMY) traverse the membrane as a helical segment. Over 307–322 (EELKDRSRRKMQNVAN) the chain is Cytoplasmic. A helical transmembrane segment spans residues 323–343 (VSFLGMFIMYLLAALFGYLTF). Topologically, residues 344-364 (NEAVEPELLHTYSKVYNFDVV) are extracellular. The helical transmembrane segment at 365 to 385 (LLIVRLAVLTAVTLTVPVVLF) threads the bilayer. T379 contributes to the Na(+) binding site. Residues 386 to 406 (PIRTSVNHLLGASKEFSWPRH) are Cytoplasmic-facing. The chain crosses the membrane as a helical span at residues 407 to 427 (ICITVALLVCVNILVIFVPTI). Residues 428–429 (RD) are Extracellular-facing. The helical transmembrane segment at 430–450 (IFGFIGASAAAMLIFILPSAF) threads the bilayer. At 451–465 (YIKLVKKESMKSVQK) the chain is on the cytoplasmic side. Residues 466–488 (IGATLFLIMGFLVMTGSMALIIM) traverse the membrane as a helical segment. Residues 489 to 504 (DWIHNALSSEEHTGGH) lie on the Extracellular side of the membrane.

Belongs to the amino acid/polyamine transporter 2 family.

The protein resides in the cell membrane. The catalysed reaction is L-alanine(in) + Na(+)(in) = L-alanine(out) + Na(+)(out). The enzyme catalyses glycine(in) + Na(+)(in) = glycine(out) + Na(+)(out). It catalyses the reaction L-serine(in) + Na(+)(in) = L-serine(out) + Na(+)(out). It carries out the reaction L-proline(in) + Na(+)(in) = L-proline(out) + Na(+)(out). The catalysed reaction is L-methionine(in) + Na(+)(in) = L-methionine(out) + Na(+)(out). The enzyme catalyses L-histidine(in) + Na(+)(in) = L-histidine(out) + Na(+)(out). It catalyses the reaction L-asparagine(in) + Na(+)(in) = L-asparagine(out) + Na(+)(out). It carries out the reaction L-glutamine(in) + Na(+)(in) = L-glutamine(out) + Na(+)(out). The catalysed reaction is L-threonine(in) + Na(+)(in) = L-threonine(out) + Na(+)(out). The enzyme catalyses L-leucine(in) + Na(+)(in) = L-leucine(out) + Na(+)(out). It catalyses the reaction L-phenylalanine(in) + Na(+)(in) = L-phenylalanine(out) + Na(+)(out). Inhibited by N-methyl-D-glucamine. Inhibited by choline. Allosteric regulation of sodium ions binding by pH. In terms of biological role, symporter that cotransports neutral amino acids and sodium ions from the extracellular to the intracellular side of the cell membrane. The transport is pH-sensitive, Li(+)-intolerant, electrogenic, driven by the Na(+) electrochemical gradient and cotransports of neutral amino acids and sodium ions with a stoichiometry of 1:1. The protein is Sodium-coupled neutral amino acid symporter 2 of Danio rerio (Zebrafish).